The primary structure comprises 425 residues: Histone-binding protein RBBP7 (425 aa).

WD repeat units follow at residues 47–122 (QWLP…KINH), 128–173 (RARY…LRLR), 181–217 (GLSW…KVVD), 228–269 (VVED…HSVD), 275–312 (VNCL…LHSF), 318–369 (EIFQ…LFIH), and 376–403 (ISDF…IWQM).

It belongs to the WD repeat RBAP46/RBAP48/MSI1 family. In terms of assembly, binds directly to helix 1 of the histone fold of histone H4, a region that is not accessible when H4 is in chromatin.

It localises to the nucleus. Functionally, core histone-binding subunit that may target chromatin remodeling factors, histone acetyltransferases and histone deacetylases to their histone substrates in a manner that is regulated by nucleosomal DNA. Component of several complexes which regulate chromatin metabolism. The chain is Histone-binding protein RBBP7 (rbbp7) from Xenopus laevis (African clawed frog).